We begin with the raw amino-acid sequence, 214 residues long: Phosphatidylserine decarboxylase proenzyme (214 aa).

The Schiff-base intermediate with substrate; via pyruvic acid role is filled by Ser-182. Ser-182 is subject to Pyruvic acid (Ser); by autocatalysis.

The protein belongs to the phosphatidylserine decarboxylase family. PSD-A subfamily. Heterodimer of a large membrane-associated beta subunit and a small pyruvoyl-containing alpha subunit. Pyruvate is required as a cofactor. Post-translationally, is synthesized initially as an inactive proenzyme. Formation of the active enzyme involves a self-maturation process in which the active site pyruvoyl group is generated from an internal serine residue via an autocatalytic post-translational modification. Two non-identical subunits are generated from the proenzyme in this reaction, and the pyruvate is formed at the N-terminus of the alpha chain, which is derived from the carboxyl end of the proenzyme. The post-translation cleavage follows an unusual pathway, termed non-hydrolytic serinolysis, in which the side chain hydroxyl group of the serine supplies its oxygen atom to form the C-terminus of the beta chain, while the remainder of the serine residue undergoes an oxidative deamination to produce ammonia and the pyruvoyl prosthetic group on the alpha chain.

It is found in the cell membrane. The enzyme catalyses a 1,2-diacyl-sn-glycero-3-phospho-L-serine + H(+) = a 1,2-diacyl-sn-glycero-3-phosphoethanolamine + CO2. The protein operates within phospholipid metabolism; phosphatidylethanolamine biosynthesis; phosphatidylethanolamine from CDP-diacylglycerol: step 2/2. In terms of biological role, catalyzes the formation of phosphatidylethanolamine (PtdEtn) from phosphatidylserine (PtdSer). In Solidesulfovibrio magneticus (strain ATCC 700980 / DSM 13731 / RS-1) (Desulfovibrio magneticus), this protein is Phosphatidylserine decarboxylase proenzyme.